Consider the following 618-residue polypeptide: D-glucuronyl C5-epimerase (618 aa).

The Cytoplasmic portion of the chain corresponds to 1 to 11; it reads MRCLAARVNYK. Residues 12–29 traverse the membrane as a helical; Signal-anchor for type II membrane protein segment; the sequence is TLIIICALFTLVTVLLWN. Over 30–618 the chain is Lumenal; sequence KCSSDKAIQF…YLKGSRAKHN (589 aa). Substrate-binding positions include Y180, 185-187, Q202, Y210, Q213, and Q216; that span reads RDR. The Ca(2+) site is built by T238, E240, T269, N270, and D393. Residues 430–433, 500–501, N511, Y515, Y561, R564, and 573–582 each bind substrate; these read KLGE, EY, and NLARWDYHTT.

This sequence belongs to the D-glucuronyl C5-epimerase family. As to quaternary structure, homodimer. Interacts with HS2ST1. As to expression, widely expressed with highest levels in lung and lowest levels in spleen.

Its subcellular location is the golgi apparatus membrane. The enzyme catalyses [heparosan-N-sulfate](n) = [heparan-N-sulfate](n). It functions in the pathway glycan metabolism; heparan sulfate biosynthesis. The protein operates within glycan metabolism; heparin biosynthesis. Functionally, converts D-glucuronic acid residues adjacent to N-sulfate sugar residues to L-iduronic acid residues, both in maturing heparan sulfate (HS) and heparin chains. This is important for further modifications that determine the specificity of interactions between these glycosaminoglycans and proteins. The chain is D-glucuronyl C5-epimerase (Glce) from Mus musculus (Mouse).